Consider the following 605-residue polypeptide: DNA primase (605 aa).

The segment at 38-62 (CPFHDEKTPSFTVSEDKQICHCFGC) adopts a CHC2-type zinc-finger fold. Residues 260–341 (DEIVLLEGFM…NVFVIQLPSG (82 aa)) enclose the Toprim domain. Mg(2+)-binding residues include glutamate 266, aspartate 310, and aspartate 312.

Belongs to the DnaG primase family. Monomer. Interacts with DnaB. Zn(2+) is required as a cofactor. It depends on Mg(2+) as a cofactor.

The catalysed reaction is ssDNA + n NTP = ssDNA/pppN(pN)n-1 hybrid + (n-1) diphosphate.. In terms of biological role, RNA polymerase that catalyzes the synthesis of short RNA molecules used as primers for DNA polymerase during DNA replication. The polypeptide is DNA primase (Staphylococcus aureus (strain MSSA476)).